A 476-amino-acid polypeptide reads, in one-letter code: Protein transport protein Sec61 subunit alpha isoform 1 (476 aa).

Residues 2 to 28 (AIKFLEVIKPFCVILPEIQKPERKIQF) are Cytoplasmic-facing. Residues 29 to 46 (KEKVLWTAITLFIFLVCC) traverse the membrane as a helical segment. Topologically, residues 47-80 (QIPLFGIMSSDSADPFYWMRVILASNRGTLMELG) are lumenal. Residues 81–97 (ISPIVTSGLIMQLLAGA) traverse the membrane as a helical segment. The Cytoplasmic portion of the chain corresponds to 98–109 (KIIEVGDTPKDR). The helical transmembrane segment at 110 to 131 (ALFNGAQKLFGMIITIGQSIVY) threads the bilayer. At 132-148 (VMTGMYGDPSEMGAGIC) the chain is on the lumenal side. A helical membrane pass occupies residues 149–167 (LLITIQLFVAGLIVLLLDE). The Cytoplasmic segment spans residues 168-177 (LLQKGYGLGS). A helical membrane pass occupies residues 178–196 (GISLFIATNICETIVWKAF). The Lumenal segment spans residues 197-241 (SPTTVNTGRGMEFEGAIIALFHLLATRTDKVRALREAFYRQNLPN). The chain crosses the membrane as a helical span at residues 242–259 (LMNLIATIFVFAVVIYFQ). Topologically, residues 260 to 285 (GFRVDLPIKSARYRGQYNTYPIKLFY) are cytoplasmic. Residues 286-306 (TSNIPIILQSALVSNLYVISQ) traverse the membrane as a helical segment. Topologically, residues 307 to 356 (MLSARFSGNLLVSLLGTWSDTSSGGPARAYPVGGLCHYLSPPESFGSVLE) are lumenal. A helical membrane pass occupies residues 357–379 (DPVHAVVYIVFMLGSCAFFSKTW). At 380-420 (IEVSGSSAKDVAKQLKEQQMVMRGHRETSMVHELNRYIPTA) the chain is on the cytoplasmic side. A helical membrane pass occupies residues 421–437 (AAFGGLCIGALSVLADF). The Lumenal portion of the chain corresponds to 438 to 443 (LGAIGS). The helical transmembrane segment at 444–458 (GTGILLAVTIIYQYF) threads the bilayer. Residues 459 to 476 (EIFVKEQSEVGSMGALLF) lie on the Cytoplasmic side of the membrane.

Belongs to the SecY/SEC61-alpha family. In terms of assembly, the SEC61 channel-forming translocon complex consists of channel-forming core components SEC61A1, SEC61B and SEC61G and different auxiliary components such as SEC62 and SEC63. The SEC61 channel associates with the multi-pass translocon (MPT) complex.

It is found in the endoplasmic reticulum membrane. In terms of biological role, component of SEC61 channel-forming translocon complex that mediates transport of signal peptide-containing precursor polypeptides across the endoplasmic reticulum (ER). Forms a ribosome receptor and a gated pore in the ER membrane, both functions required for cotranslational translocation of nascent polypeptides. May cooperate with auxiliary protein SEC62, SEC63 and HSPA5/BiP to enable post-translational transport of small presecretory proteins. The SEC61 channel is also involved in ER membrane insertion of transmembrane proteins: it mediates membrane insertion of the first few transmembrane segments of proteins, while insertion of subsequent transmembrane regions of multi-pass membrane proteins is mediated by the multi-pass translocon (MPT) complex. The SEC61 channel cooperates with the translocating protein TRAM1 to import nascent proteins into the ER. Controls the passive efflux of calcium ions from the ER lumen to the cytosol through SEC61 channel, contributing to the maintenance of cellular calcium homeostasis. Plays a critical role in nephrogenesis, specifically at pronephros stage. This is Protein transport protein Sec61 subunit alpha isoform 1 (SEC61A1) from Canis lupus familiaris (Dog).